Reading from the N-terminus, the 300-residue chain is Ribosomal RNA small subunit methyltransferase H (300 aa).

Residues 33 to 35, D52, F79, D100, and Q107 contribute to the S-adenosyl-L-methionine site; that span reads GGH.

The protein belongs to the methyltransferase superfamily. RsmH family.

Its subcellular location is the cytoplasm. It catalyses the reaction cytidine(1402) in 16S rRNA + S-adenosyl-L-methionine = N(4)-methylcytidine(1402) in 16S rRNA + S-adenosyl-L-homocysteine + H(+). In terms of biological role, specifically methylates the N4 position of cytidine in position 1402 (C1402) of 16S rRNA. This Mycoplasmopsis agalactiae (strain NCTC 10123 / CIP 59.7 / PG2) (Mycoplasma agalactiae) protein is Ribosomal RNA small subunit methyltransferase H.